The following is a 104-amino-acid chain: LKTFCLFLQIAVFIALGIQIFLCGTDALNNENELFSVEYCGANCTQQDNGSWTKCKGNCTCYHEDGKRYGLCLSTEYTDFTQFPKPTSEEIADASPRPKETNSH.

A signal peptide spans 1–27 (LKTFCLFLQIAVFIALGIQIFLCGTDA). Intrachain disulfides connect Cys40–Cys59, Cys44–Cys61, and Cys55–Cys72. Residues Asn43, Asn49, and Asn58 are each glycosylated (N-linked (GlcNAc...) asparagine). Residues 85 to 104 (KPTSEEIADASPRPKETNSH) form a disordered region.

The protein localises to the secreted. Salivary chemokine-binding protein which binds to host chemokines CXCL1 and CXCL8. The polypeptide is Evasin P1174 (Ixodes ricinus (Common tick)).